The sequence spans 292 residues: 2-(5''-triphosphoribosyl)-3'-dephosphocoenzyme-A synthase (292 aa).

Belongs to the CitG/MdcB family.

The catalysed reaction is 3'-dephospho-CoA + ATP = 2'-(5''-triphospho-alpha-D-ribosyl)-3'-dephospho-CoA + adenine. Catalyzes the formation of 2-(5''-triphosphoribosyl)-3'-dephosphocoenzyme-A, the precursor of the prosthetic group of the holo-acyl carrier protein (gamma chain) of citrate lyase, from ATP and dephospho-CoA. The sequence is that of 2-(5''-triphosphoribosyl)-3'-dephosphocoenzyme-A synthase from Escherichia coli (strain SMS-3-5 / SECEC).